A 599-amino-acid chain; its full sequence is MSKLNHIRNFSIIAHIDHGKSTLADRFIQYCGGLSDREMSEQVLDSMDIERERGITIKAQSVTLYYDAKDGSRYQLNFIDTPGHVDFSYEVSRSLAACEGALLVVDAAQGVEAQSVANCYTAIEMGLEVIPILNKMDLPQAEPARVRHEIEEIIGIDAAGAVEASAKAGMGIQESLEQIVQLVPPPEGDPDAPLQALIIDSWFDNYLGVVSLVRVKNGTLNKGDKILIKSTKTQELVTSIGVFTPKRTETGCLKAGEVGYVIAGIKDIHGAPVGDTITLAKTPDVASLPGFKRVQPQVYAGVFPVSSDDYEDFRDALDKLTLNDASLFFEPETSDALGFGFRCGFLGMLHMEIIQERLEREYDLDLITTAPTVVYEVLTKKNEVIKVDNPSRLPDPGFIEEMREPIVEANILVPQAYLGNVISLCVEKRGVQKNMQFLGNQVALSYELPMGEVVLDFFDRLKSVSRGYASLDYHFVRFQAANLVRLDILINGDKVDALALIVHRDNAASRGRLLTEKMKELIPRQMFDVAIQAAIGGQIVSRTTVKALRKNVLAKCYGGDVSRKKKLLQKQKEGKKRMKQVGSVEIPQDAFLAVLKVDK.

Residues 5–187 (NHIRNFSIIA…QIVQLVPPPE (183 aa)) form the tr-type G domain. GTP contacts are provided by residues 17–22 (DHGKST) and 134–137 (NKMD).

Belongs to the TRAFAC class translation factor GTPase superfamily. Classic translation factor GTPase family. LepA subfamily.

Its subcellular location is the cell inner membrane. The enzyme catalyses GTP + H2O = GDP + phosphate + H(+). Functionally, required for accurate and efficient protein synthesis under certain stress conditions. May act as a fidelity factor of the translation reaction, by catalyzing a one-codon backward translocation of tRNAs on improperly translocated ribosomes. Back-translocation proceeds from a post-translocation (POST) complex to a pre-translocation (PRE) complex, thus giving elongation factor G a second chance to translocate the tRNAs correctly. Binds to ribosomes in a GTP-dependent manner. The chain is Elongation factor 4 from Hahella chejuensis (strain KCTC 2396).